The sequence spans 106 residues: Synaptic plasticity regulator PANTS (106 aa).

Positions 67–106 (LQQSEKTRLEGKQNNSPVWTLRKNPPPDWYLPLDPGKPRQ) are disordered.

The protein belongs to the UPF0545 family. In terms of processing, rapidly degraded by proteolysis following neuronal stimulation, resulting in increased AMPA receptor clustering.

Its subcellular location is the synapse. The protein resides in the synaptic cleft. Negatively regulates long-term potentiation and modulates adult synaptic plasticity. The chain is Synaptic plasticity regulator PANTS from Xenopus laevis (African clawed frog).